The primary structure comprises 1172 residues: MEKHRARALGRDSKASRRKGLPSAPPAGPYELGEKRPKLHLNIRTLTDDMLDKFASIRIPKGSKKERPPLPQLKTVSGSSDYSSVSSETMENNPKSLSENEVLKLFEKMMEDMNLNEDKKAPLREKDFSIKKEMVMQYINTASKTGSLRSSRQISPQEFIHELKMGYTGERLFTYLESLRVSLTSNPVSWVQNFGHEGLGLLLDILEKLINGQIQEKVVKKTQHKVIQCLRALMNTQYGLERIMSDERSLSLLAKAMDPKQPSMMADVVKLLSAVCIVGEESILEEVLEALTSAGEERKIDRFFSIVEGLRHNSVQLQVACMQLINALVTSPDDLDFRLHLRNEFMRCGLKEILPNLKGIKNDGLDIQLKVFDEHKEEDLSEFSHRFEDIRAEFDEASDVYSVVWDTVKETRAEGHFVSILQHLLLIRNDRFIRQQYFKLIDECVSQIVLHRDGIDPDFTYRKRLDLDLSQFVDVCIDQAKLEEWEEKASEHCKKFEKECTDHQETQAQLQKKEAKINELQAELQAFKSQFGALPPGTKIPLQTSAKGEPGPSAFPPAPPALGAGVPPPPPPPPPPPPPLPGMAMPFGGPVPPPPPLGFLGGQNFIPLNLPFGLKPKKEFKPEISMRRLNWLKIGPNEMSENCFWIKVNENKYENKDLLCKLENTFCCLEKEKRDTNDFDEKKVIKKRMKELKFLDPKIAQNLSIFLSSFRVPYEKIRTMILEVDEAQLSESMIQNLMKHLPDEEQLKSLSQFRSDYNSLCEPEQFAVVMSNVKRLRPRLTAILFKLQFEEQVNNINPDIMAVSTACEEIKKSKSFSKLLELVLLMGNYMNAGSRNAQTFGFDLSSLCKLKDTKSADQKTTLLHFLVDVCEEKHPDILPFVDDLAHLDKASRVSVEMLEKSLKQMGRQLLQLEKNLETFPPPEDLHDKFVIKMSSFIITAKEHYGKLSTLLDNMTQLYQSVMSYYAVDTKKVSVEEFFNDLNNFRTSFMQALKENIRKREAAEKEKRARIAKERAEKERLERQQEKKRLLEMKTEGDETGVMDSLLEALQSGAAFRDRRKRTPKLKDIRQSLSPMSQRPVLKVCNHENQKMQLSEGSRPHHSINCTSTRTPVAKELNCNLDTHTSTGRIKAVEKEACNAESNRKKEMELLGSVSKSESVPEVEALLARLRAL.

The span at 1 to 15 shows a compositional bias: basic and acidic residues; it reads MEKHRARALGRDSKA. The disordered stretch occupies residues 1-36; it reads MEKHRARALGRDSKASRRKGLPSAPPAGPYELGEKR. A Nuclear localization signal motif is present at residues 16–39; sequence SRRKGLPSAPPAGPYELGEKRPKL. At T47 the chain carries Phosphothreonine. S56 bears the Phosphoserine mark. A disordered region spans residues 57–96; it reads IRIPKGSKKERPPLPQLKTVSGSSDYSSVSSETMENNPKS. The span at 77 to 87 shows a compositional bias: low complexity; sequence SGSSDYSSVSS. In terms of domain architecture, GBD/FH3 spans 94–456; sequence PKSLSENEVL…QIVLHRDGID (363 aa). The residue at position 155 (S155) is a Phosphoserine. The stretch at 493-530 forms a coiled coil; it reads CKKFEKECTDHQETQAQLQKKEAKINELQAELQAFKSQ. Residues 535 to 586 form a disordered region; it reads PPGTKIPLQTSAKGEPGPSAFPPAPPALGAGVPPPPPPPPPPPPPLPGMAMP. Residues 541 to 611 form the FH1 domain; that stretch reads PLQTSAKGEP…GQNFIPLNLP (71 aa). Residues 553–581 show a composition bias toward pro residues; the sequence is SAFPPAPPALGAGVPPPPPPPPPPPPPLP. Residues 616–1014 enclose the FH2 domain; sequence PKKEFKPEIS…EKRARIAKER (399 aa). Residues 1037–1067 form the DAD domain; sequence DETGVMDSLLEALQSGAAFRDRRKRTPKLKD. Phosphoserine occurs at positions 1073 and 1158. The Nuclear export signal motif lies at 1163–1172; the sequence is EALLARLRAL.

Belongs to the formin homology family. Diaphanous subfamily. Post-translationally, ubiquitinated. In terms of tissue distribution, expressed in testis. Present in Sertoli cells (at protein level).

The protein localises to the cytoplasm. Its subcellular location is the nucleus. Actin nucleation and elongation factor required for the assembly of F-actin structures, such as actin cables and stress fibers. Required for cytokinesis, stress fiber formation and transcriptional activation of the serum response factor. Binds to GTP-bound form of Rho and to profilin: acts in a Rho-dependent manner to recruit profilin to the membrane, where it promotes actin polymerization. DFR proteins couple Rho and Src tyrosine kinase during signaling and the regulation of actin dynamics. Also acts as an actin nucleation and elongation factor in the nucleus by promoting nuclear actin polymerization inside the nucleus to drive serum-dependent SRF-MRTFA activity. The protein is Protein diaphanous homolog 3 of Rattus norvegicus (Rat).